Reading from the N-terminus, the 168-residue chain is Avenin-like a1 (168 aa).

Residues 1-19 (MKTMFLLALLAFTATSAVA) form the signal peptide.

The protein belongs to the prolamin family. In terms of processing, contains 7 disulfide bonds.

Functionally, seed storage protein. Not integrated in the gluten polymer through disulfide bonds, unless incorporated by reduction and reoxidation during dough making. Increases dough strength and bread volume, but decreases dough stability when added into a base wheat flour. This chain is Avenin-like a1 (AVNLA), found in Triticum aestivum (Wheat).